Reading from the N-terminus, the 101-residue chain is Small ribosomal subunit protein bS18c (101 aa).

A compositionally biased stretch (basic residues) spans 1–19; it reads MDKSKQLFRKSKGSFRRRL. The segment at 1-23 is disordered; the sequence is MDKSKQLFRKSKGSFRRRLPPIG.

It belongs to the bacterial ribosomal protein bS18 family. In terms of assembly, part of the 30S ribosomal subunit.

Its subcellular location is the plastid. It is found in the chloroplast. The chain is Small ribosomal subunit protein bS18c from Acorus gramineus (Dwarf sweet flag).